A 201-amino-acid polypeptide reads, in one-letter code: Small ribosomal subunit protein uS4 (201 aa).

The tract at residues 21 to 43 is disordered; that stretch reads GTGKELNRRPYAPGDHGQGRRQK. An S4 RNA-binding domain is found at 93-153; it reads RRLDNMVYRL…EKSKDMAIIK (61 aa).

This sequence belongs to the universal ribosomal protein uS4 family. In terms of assembly, part of the 30S ribosomal subunit. Contacts protein S5. The interaction surface between S4 and S5 is involved in control of translational fidelity.

One of the primary rRNA binding proteins, it binds directly to 16S rRNA where it nucleates assembly of the body of the 30S subunit. In terms of biological role, with S5 and S12 plays an important role in translational accuracy. This chain is Small ribosomal subunit protein uS4, found in Levilactobacillus brevis (strain ATCC 367 / BCRC 12310 / CIP 105137 / JCM 1170 / LMG 11437 / NCIMB 947 / NCTC 947) (Lactobacillus brevis).